The chain runs to 284 residues: 2,3,4,5-tetrahydropyridine-2,6-dicarboxylate N-succinyltransferase (284 aa).

This sequence belongs to the transferase hexapeptide repeat family.

It localises to the cytoplasm. It carries out the reaction (S)-2,3,4,5-tetrahydrodipicolinate + succinyl-CoA + H2O = (S)-2-succinylamino-6-oxoheptanedioate + CoA. The protein operates within amino-acid biosynthesis; L-lysine biosynthesis via DAP pathway; LL-2,6-diaminopimelate from (S)-tetrahydrodipicolinate (succinylase route): step 1/3. In Brucella abortus (strain S19), this protein is 2,3,4,5-tetrahydropyridine-2,6-dicarboxylate N-succinyltransferase.